We begin with the raw amino-acid sequence, 27 residues long: uncharacterized protein (27 aa).

Residues 3–23 (IILWAVLIIFLIGLLVVTGVF) form a helical membrane-spanning segment.

It localises to the cell inner membrane. This is an uncharacterized protein from Escherichia coli (strain K12).